The following is a 341-amino-acid chain: N-acetyl-gamma-glutamyl-phosphate reductase 2 (341 aa).

The active site involves Cys-146.

It belongs to the NAGSA dehydrogenase family. Type 1 subfamily.

The protein localises to the cytoplasm. The catalysed reaction is N-acetyl-L-glutamate 5-semialdehyde + phosphate + NADP(+) = N-acetyl-L-glutamyl 5-phosphate + NADPH + H(+). The protein operates within amino-acid biosynthesis; L-arginine biosynthesis; N(2)-acetyl-L-ornithine from L-glutamate: step 3/4. In terms of biological role, catalyzes the NADPH-dependent reduction of N-acetyl-5-glutamyl phosphate to yield N-acetyl-L-glutamate 5-semialdehyde. In Lactiplantibacillus plantarum (strain ATCC BAA-793 / NCIMB 8826 / WCFS1) (Lactobacillus plantarum), this protein is N-acetyl-gamma-glutamyl-phosphate reductase 2.